A 275-amino-acid chain; its full sequence is 2-dehydro-3-deoxyphosphooctonate aldolase (275 aa).

Belongs to the KdsA family.

Its subcellular location is the cytoplasm. The catalysed reaction is D-arabinose 5-phosphate + phosphoenolpyruvate + H2O = 3-deoxy-alpha-D-manno-2-octulosonate-8-phosphate + phosphate. It functions in the pathway carbohydrate biosynthesis; 3-deoxy-D-manno-octulosonate biosynthesis; 3-deoxy-D-manno-octulosonate from D-ribulose 5-phosphate: step 2/3. The protein operates within bacterial outer membrane biogenesis; lipopolysaccharide biosynthesis. The polypeptide is 2-dehydro-3-deoxyphosphooctonate aldolase (Francisella tularensis subsp. mediasiatica (strain FSC147)).